The primary structure comprises 337 residues: Anthranilate phosphoribosyltransferase (337 aa).

5-phospho-alpha-D-ribose 1-diphosphate contacts are provided by residues G80, 83 to 84 (GD), T88, 90 to 93 (NIST), 108 to 116 (KHGNRAVSS), and S120. G80 is a binding site for anthranilate. Position 92 (S92) interacts with Mg(2+). Position 111 (N111) interacts with anthranilate. R166 contacts anthranilate. Mg(2+) is bound by residues D224 and E225.

Belongs to the anthranilate phosphoribosyltransferase family. In terms of assembly, homodimer. It depends on Mg(2+) as a cofactor.

It carries out the reaction N-(5-phospho-beta-D-ribosyl)anthranilate + diphosphate = 5-phospho-alpha-D-ribose 1-diphosphate + anthranilate. Its pathway is amino-acid biosynthesis; L-tryptophan biosynthesis; L-tryptophan from chorismate: step 2/5. In terms of biological role, catalyzes the transfer of the phosphoribosyl group of 5-phosphorylribose-1-pyrophosphate (PRPP) to anthranilate to yield N-(5'-phosphoribosyl)-anthranilate (PRA). This chain is Anthranilate phosphoribosyltransferase, found in Anaeromyxobacter sp. (strain K).